A 438-amino-acid polypeptide reads, in one-letter code: L-cysteine:1D-myo-inositol 2-amino-2-deoxy-alpha-D-glucopyranoside ligase (438 aa).

Positions 1–27 are disordered; the sequence is MKSWSSRPVPELPGTGTAPRVHDTSTG. C44 serves as a coordination point for Zn(2+). Residues 44–47, T59, and 82–84 each bind L-cysteinyl-5'-AMP; these read CGIT and NVT. The 'HIGH' region signature appears at 46–56; sequence ITPYDATHMGH. The short motif at 208–213 is the 'ERGGDP' region element; the sequence is DHGGDP. Residue W249 coordinates L-cysteinyl-5'-AMP. C253 is a binding site for Zn(2+). 271–273 is an L-cysteinyl-5'-AMP binding site; that stretch reads GSD. H278 is a Zn(2+) binding site. V304 contributes to the L-cysteinyl-5'-AMP binding site. The 'KMSKS' region motif lies at 310-314; that stretch reads KMSKS.

It belongs to the class-I aminoacyl-tRNA synthetase family. MshC subfamily. In terms of assembly, monomer. The cofactor is Zn(2+).

It catalyses the reaction 1D-myo-inositol 2-amino-2-deoxy-alpha-D-glucopyranoside + L-cysteine + ATP = 1D-myo-inositol 2-(L-cysteinylamino)-2-deoxy-alpha-D-glucopyranoside + AMP + diphosphate + H(+). Catalyzes the ATP-dependent condensation of GlcN-Ins and L-cysteine to form L-Cys-GlcN-Ins. This Kocuria rhizophila (strain ATCC 9341 / DSM 348 / NBRC 103217 / DC2201) protein is L-cysteine:1D-myo-inositol 2-amino-2-deoxy-alpha-D-glucopyranoside ligase.